Here is a 339-residue protein sequence, read N- to C-terminus: Uricase (339 aa).

Residues K33 and T78 each act as charge relay system in the active site. Residues T78, D79, F201, R218, V266, Q267, and N293 each contribute to the urate site. H295 functions as the Charge relay system in the catalytic mechanism. The Microbody targeting signal signature appears at 337 to 339; it reads SHL.

It belongs to the uricase family.

The protein localises to the peroxisome. The enzyme catalyses urate + O2 + H2O = 5-hydroxyisourate + H2O2. It functions in the pathway purine metabolism; urate degradation; (S)-allantoin from urate: step 1/3. Its function is as follows. Catalyzes the oxidation of uric acid to 5-hydroxyisourate, which is further processed to form (S)-allantoin. The chain is Uricase (Uro) from Drosophila subobscura (Fruit fly).